We begin with the raw amino-acid sequence, 709 residues long: Elongation factor G (709 aa).

The region spanning 9 to 296 is the tr-type G domain; sequence AKVRNIGIMA…AVVRYLPSPL (288 aa). Residues 18 to 25, 86 to 90, and 140 to 143 each bind GTP; these read AHIDAGKT, DTPGH, and NKLD.

Belongs to the TRAFAC class translation factor GTPase superfamily. Classic translation factor GTPase family. EF-G/EF-2 subfamily.

The protein localises to the cytoplasm. Catalyzes the GTP-dependent ribosomal translocation step during translation elongation. During this step, the ribosome changes from the pre-translocational (PRE) to the post-translocational (POST) state as the newly formed A-site-bound peptidyl-tRNA and P-site-bound deacylated tRNA move to the P and E sites, respectively. Catalyzes the coordinated movement of the two tRNA molecules, the mRNA and conformational changes in the ribosome. The protein is Elongation factor G of Streptomyces griseus subsp. griseus (strain JCM 4626 / CBS 651.72 / NBRC 13350 / KCC S-0626 / ISP 5235).